Consider the following 330-residue polypeptide: Neurogenic differentiation factor 4 (330 aa).

A disordered region spans residues 1–79 (MTKTYTKAKE…RGPKKKKMTK (79 aa)). Residues 25 to 35 (LSSKDELKAEN) show a composition bias toward basic and acidic residues. A compositionally biased stretch (acidic residues) spans 52–64 (DSIEEEEEEEDDG). The segment covering 67–79 (PKRRGPKKKKMTK) has biased composition (basic residues). The Nuclear localization signal motif lies at 73–79 (KKKKMTK). Positions 87 to 139 (ARRVKANARERTRMHGLNDALDNLRRVMPCYSKTQKLSKIETLRLARNYIWAL) constitute a bHLH domain. Residues 162–183 (LSQPTSNLVAGCLQLGPQTLFL) are leucine-zipper.

In terms of assembly, efficient DNA binding requires dimerization with another bHLH protein. Serine or threonine phosphorylation within the basic region may regulate neurogenic activity. As to expression, expressed in both the developing central nervous system and peripheral nervous system.

Its subcellular location is the nucleus. Its function is as follows. Probably acts as a transcriptional activator. Mediates neuronal differentiation. Required for the regulation of amacrine cell fate specification in the retina. In Gallus gallus (Chicken), this protein is Neurogenic differentiation factor 4 (NEUROD4).